Consider the following 31-residue polypeptide: Photosystem II reaction center protein T (31 aa).

A helical transmembrane segment spans residues 3–23; sequence ALVYTFLLIGTLGIIFFAIFF.

The protein belongs to the PsbT family. PSII is composed of 1 copy each of membrane proteins PsbA, PsbB, PsbC, PsbD, PsbE, PsbF, PsbH, PsbI, PsbJ, PsbK, PsbL, PsbM, PsbT, PsbY, PsbZ, Psb30/Ycf12, at least 3 peripheral proteins of the oxygen-evolving complex and a large number of cofactors. It forms dimeric complexes.

The protein resides in the plastid. The protein localises to the chloroplast thylakoid membrane. Found at the monomer-monomer interface of the photosystem II (PS II) dimer, plays a role in assembly and dimerization of PSII. PSII is a light-driven water plastoquinone oxidoreductase, using light energy to abstract electrons from H(2)O, generating a proton gradient subsequently used for ATP formation. This Tetradesmus obliquus (Green alga) protein is Photosystem II reaction center protein T.